A 244-amino-acid chain; its full sequence is Mitochondrial import inner membrane translocase subunit Tim21 (244 aa).

Residues 1–18 constitute a mitochondrion transit peptide; the sequence is MICAFLRVVQHAEKLHGS. The tract at residues 65 to 96 is disordered; the sequence is TQGPDPRKAKEDSTKQVSIRRNQREETGVSMS. The segment covering 69 to 78 has biased composition (basic and acidic residues); it reads DPRKAKEDST. The chain crosses the membrane as a helical span at residues 107-127; sequence SYLIVVLFGVGLTGGLLYAIF.

Belongs to the TIM21 family. Component of the TIM23 complex. Component of the MITRAC (mitochondrial translation regulation assembly intermediate of cytochrome c oxidase complex) complex, the core components of this complex being COA3/MITRAC12 and COX14. Interacts with COA3 and MT-CO1/COX1.

The protein resides in the mitochondrion membrane. Participates in the translocation of transit peptide-containing proteins across the mitochondrial inner membrane. Also required for assembly of mitochondrial respiratory chain complex I and complex IV as component of the MITRAC (mitochondrial translation regulation assembly intermediate of cytochrome c oxidase complex) complex. Probably shuttles between the presequence translocase and respiratory-chain assembly intermediates in a process that promotes incorporation of early nuclear-encoded subunits into these complexes. This Mus musculus (Mouse) protein is Mitochondrial import inner membrane translocase subunit Tim21 (Timm21).